Consider the following 393-residue polypeptide: Probable acetyl-CoA acetyltransferase (393 aa).

The active-site Acyl-thioester intermediate is the Cys88. Catalysis depends on proton acceptor residues His349 and Cys379.

The protein belongs to the thiolase-like superfamily. Thiolase family.

The enzyme catalyses 2 acetyl-CoA = acetoacetyl-CoA + CoA. The chain is Probable acetyl-CoA acetyltransferase (fadA4) from Mycobacterium leprae (strain TN).